A 361-amino-acid polypeptide reads, in one-letter code: Thymidine kinase (361 aa).

ATP is bound at residue 17-24 (GPHGVGKS). The active-site Proton acceptor is Glu46. The substrate site is built by Tyr64 and Gln88. Arg184 contacts ATP. Arg190 contacts substrate.

Belongs to the herpesviridae thymidine kinase family. In terms of assembly, homodimer.

It carries out the reaction thymidine + ATP = dTMP + ADP + H(+). Functionally, catalyzes the transfer of the gamma-phospho group of ATP to thymidine to generate dTMP in the salvage pathway of pyrimidine synthesis. The dTMP serves as a substrate for DNA polymerase during viral DNA replication. Allows the virus to be reactivated and to grow in non-proliferative cells lacking a high concentration of phosphorylated nucleic acid precursors. The protein is Thymidine kinase of Saimiriine herpesvirus 1 (strain MV-5-4-PSL) (SaHV-1).